Here is a 2752-residue protein sequence, read N- to C-terminus: Serine/arginine repetitive matrix protein 2 (2752 aa).

Met1 is subject to N-acetylmethionine. A coiled-coil region spans residues 60 to 92 (HERKRRVELRCLELEEMMEEQGYEEQQIQEKVA). Position 101 is an N6-acetyllysine (Lys101). Glycyl lysine isopeptide (Lys-Gly) (interchain with G-Cter in SUMO2) cross-links involve residues Lys108 and Lys130. The interval 141–2131 (ISDSYVDGSS…MSPTPLDRCR (1991 aa)) is disordered. Tyr145 bears the Phosphotyrosine mark. Position 169 is an N6-acetyllysine (Lys169). Positions 175-185 (RESSSSRSPTP) are enriched in low complexity. Composition is skewed to basic residues over residues 186-197 (KQKKKKKKKDRG) and 207-249 (RERK…KRSR). Residues 197–259 (GRRSESSSPR…STTPAPKSRR (63 aa)) are sufficient for RNA-binding. Ser220 and Ser222 each carry phosphoserine. Positions 263-290 (STSADSASSSDTSRSRSRSAAAKTHTTA) are enriched in low complexity. At Thr286 the chain carries Phosphothreonine. 5 positions are modified to phosphoserine: Ser295, Ser297, Ser300, Ser322, and Ser323. Residues 313-333 (PGTTSTQRPSSPETATKQPSS) are compositionally biased toward polar residues. Positions 335-347 (YEDKDKDKKEKSA) are enriched in basic and acidic residues. A compositionally biased stretch (low complexity) spans 348-360 (TRPSPSPERSSTG). Residues Ser351, Ser353, Ser357, and Ser358 each carry the phosphoserine modification. Phosphothreonine is present on residues Thr359 and Thr367. At Ser377 the chain carries Phosphoserine. The segment covering 380–398 (PLATTPLSQEPVNPPSEAS) has biased composition (polar residues). Phosphothreonine occurs at positions 383 and 384. Phosphoserine occurs at positions 387, 395, 398, 404, and 408. Over residues 399–410 (PTRDRSPPKSPE) the composition is skewed to basic and acidic residues. Residues 411–421 (KLPQSSSSESS) are compositionally biased toward low complexity. A phosphoserine mark is found at Ser424, Ser435, Ser436, Ser437, Ser440, and Ser454. The span at 461–483 (NRSHGRAKRDKSHSHTPSRRMGR) shows a compositional bias: basic residues. Phosphoserine is present on residues Ser484, Ser486, Ser506, Ser508, Ser510, Ser534, Ser536, and Ser543. The span at 491-536 (KRGRSRSRTPTKRGHSRSRSPQWRRSRSAQRWGRSRSPQRRGRSRS) shows a compositional bias: basic residues. Low complexity predominate over residues 537–546 (PQRPGWSRSR). Basic residues-rich tracts occupy residues 547–564 (NTQRRGRSRSARRGRSHS), 571–723 (GRSR…RRGR), and 732–742 (NKSRTSQRRSR). Phosphoserine is present on residues Ser702, Ser704, and Ser706. Ser778, Ser780, and Ser783 each carry phosphoserine. The segment covering 790–805 (SQTPPRRSRSGSSQPK) has biased composition (low complexity). The span at 806 to 816 (AKSRTPPRRSR) shows a compositional bias: basic residues. Low complexity predominate over residues 828–841 (KTPSRQSHSSSSPH). Ser846 and Ser854 each carry phosphoserine. The span at 849 to 869 (PPRQGSITSPQANEQSVTPQR) shows a compositional bias: polar residues. Phosphothreonine is present on Thr856. Residues Ser857 and Ser864 each carry the phosphoserine modification. Position 866 is a phosphothreonine (Thr866). Phosphoserine is present on residues Ser871, Ser875, Ser876, Ser908, Ser935, Ser950, Ser952, Ser954, Ser957, Ser968, Ser970, Ser972, Ser973, and Ser974. 2 stretches are compositionally biased toward low complexity: residues 901 to 917 (SSTPPRQSPSRSSSPQP) and 924 to 945 (SPRQRSHSGSSSPSPSRVTSRT). Thr977 and Thr983 each carry phosphothreonine. Phosphoserine is present on residues Ser992 and Ser994. Tyr996 is subject to Phosphotyrosine. Position 1003 is a phosphothreonine (Thr1003). Low complexity predominate over residues 1008–1017 (SLSGSKSPCP). Residues Ser1010, Ser1014, Ser1024, Ser1028, Ser1032, and Ser1042 each carry the phosphoserine modification. Over residues 1040 to 1064 (KSSTPPGESYFGVSSLQLKGQSQTS) the composition is skewed to polar residues. Residue Thr1043 is modified to Phosphothreonine. Tyr1049 is modified (phosphotyrosine). A phosphoserine mark is found at Ser1064, Ser1069, Ser1072, Ser1073, Ser1083, Ser1099, Ser1101, Ser1102, and Ser1103. Residues 1071–1092 (TSSPEVRQSHSESPSLQSKSQT) are compositionally biased toward polar residues. Over residues 1093 to 1104 (SPKGGRSRSSSP) the composition is skewed to low complexity. The residue at position 1106 (Thr1106) is a Phosphothreonine. Phosphoserine is present on residues Ser1112, Ser1122, Ser1124, Ser1129, Ser1132, Ser1152, Ser1179, Ser1188, and Ser1198. A compositionally biased stretch (polar residues) spans 1132–1159 (SPEQSRFQSDSSSYPTVDSNSLLGQSRL). Over residues 1204–1214 (DTLRTPPRERS) the composition is skewed to basic and acidic residues. Thr1208 bears the Phosphothreonine mark. Ser1214, Ser1219, Ser1227, Ser1254, Ser1257, Ser1258, Ser1266, Ser1270, and Ser1271 each carry phosphoserine. The segment covering 1216–1233 (AGSSPETKEQNSALPTSS) has biased composition (polar residues). The segment covering 1283–1292 (TLDQSQSQAS) has biased composition (polar residues). A phosphoserine mark is found at Ser1311, Ser1318, Ser1320, Ser1326, Ser1329, Ser1336, Ser1348, Ser1368, Ser1382, Ser1383, Ser1384, Ser1387, Ser1401, Ser1403, and Ser1404. Over residues 1318-1328 (SNSPLRENSFG) the composition is skewed to polar residues. Over residues 1376–1386 (TRSSGHSSSEL) the composition is skewed to polar residues. Thr1413 is subject to Phosphothreonine. Phosphoserine occurs at positions 1415, 1421, 1423, and 1424. Position 1434 is a phosphothreonine (Thr1434). Residues 1441-1452 (SGSSPGLRDGSG) show a composition bias toward low complexity. Phosphoserine occurs at positions 1444 and 1451. Thr1453 is subject to Phosphothreonine. Over residues 1453 to 1463 (TPSRHSLSGSS) the composition is skewed to polar residues. Phosphoserine occurs at positions 1458, 1460, 1462, and 1463. Phosphothreonine is present on Thr1472. Residues Ser1482 and Ser1483 each carry the phosphoserine modification. The residue at position 1492 (Thr1492) is a Phosphothreonine. Ser1497, Ser1499, Ser1501, and Ser1502 each carry phosphoserine. Thr1511 carries the phosphothreonine modification. Residues Ser1517, Ser1519, Ser1521, and Ser1522 each carry the phosphoserine modification. At Thr1531 the chain carries Phosphothreonine. Polar residues predominate over residues 1534–1544 (GQRSRSGSSQE). Phosphoserine is present on residues Ser1537, Ser1539, Ser1541, Ser1542, and Ser1552. Over residues 1555-1567 (ERSESDSSPDSKA) the composition is skewed to basic and acidic residues. The span at 1568–1577 (KTRTPLRQRS) shows a compositional bias: basic residues. Residues Ser1577, Ser1579, Ser1581, Ser1582, Ser1598, Ser1600, Ser1601, Ser1616, Ser1620, Ser1621, Ser1648, Ser1658, Ser1691, Ser1693, and Ser1694 each carry the phosphoserine modification. Residues 1638–1657 (SGSSSKGRGPSPEGSSSTES) show a composition bias toward low complexity. The span at 1681–1691 (KSRTPPRRRSS) shows a compositional bias: basic residues. Thr1698 carries the phosphothreonine modification. Phosphoserine is present on residues Ser1727, Ser1729, Ser1731, Ser1732, Ser1762, and Ser1764. Composition is skewed to basic residues over residues 1769–1789 (GLQRSRSRSRREKTRTTRRRD) and 1798–1816 (SRRRQRSRSRSRVTRRRRG). Ser1818, Ser1822, Ser1854, Ser1857, Ser1876, and Ser1878 each carry phosphoserine. Over residues 1834–1854 (SSRRRRGRSRTPPTSRKRSRS) the composition is skewed to basic residues. The segment covering 1862-2068 (KRSRSRASPA…PRTARGKRSL (207 aa)) has biased composition (basic residues). Thr1880 carries the phosphothreonine modification. A phosphoserine mark is found at Ser1884 and Ser1890. The residue at position 1892 (Thr1892) is a Phosphothreonine. Phosphoserine is present on residues Ser1893, Ser1916, Ser1919, Ser1923, and Ser1925. A phosphothreonine mark is found at Thr1927 and Thr1931. A phosphoserine mark is found at Ser1946 and Ser1948. Phosphothreonine is present on residues Thr1950 and Thr1954. Phosphoserine is present on residues Ser1958 and Ser1960. A phosphothreonine mark is found at Thr1962 and Thr1966. Ser1970, Ser1972, and Ser1975 each carry phosphoserine. Thr1978 is subject to Phosphothreonine. A phosphoserine mark is found at Ser1984, Ser1987, Ser1996, Ser1999, Ser2008, Ser2011, Ser2018, and Ser2020. Thr2022 is modified (phosphothreonine). A phosphoserine mark is found at Ser2030 and Ser2032. Position 2034 is a phosphothreonine (Thr2034). A phosphoserine mark is found at Ser2042, Ser2044, Ser2046, and Ser2067. At Thr2069 the chain carries Phosphothreonine. A compositionally biased stretch (low complexity) spans 2070 to 2095 (RSPPAIRRRSASGSSSDRSRSATPPA). Residues Ser2071 and Ser2090 each carry the phosphoserine modification. The residue at position 2092 (Thr2092) is a Phosphothreonine. Over residues 2097–2124 (RNHSGSRTPPVALNSSRMSCFSRPSMSP) the composition is skewed to polar residues. Phosphoserine occurs at positions 2100 and 2102. Thr2104 carries the post-translational modification Phosphothreonine. Phosphoserine occurs at positions 2118, 2121, 2123, and 2132. Residue Thr2144 is modified to Phosphothreonine. An omega-N-methylarginine mark is found at Arg2194, Arg2207, Arg2231, and Arg2246. Ser2272 carries the phosphoserine modification. Omega-N-methylarginine occurs at positions 2274 and 2288. Thr2289, Thr2291, and Thr2302 each carry phosphothreonine. Residue Ser2310 is modified to Phosphoserine. The disordered stretch occupies residues 2311 to 2342 (LTGSGTPPTAANYPSSSRTPQAPASANLVGPR). Thr2316 and Thr2329 each carry phosphothreonine. Residues 2317–2334 (PPTAANYPSSSRTPQAPA) are compositionally biased toward polar residues. Ser2335 is modified (phosphoserine). Position 2342 is an omega-N-methylarginine (Arg2342). 3 positions are modified to phosphoserine: Ser2343, Ser2368, and Ser2376. Thr2381 is subject to Phosphothreonine. At Ser2382 the chain carries Phosphoserine. Arg2384 carries the post-translational modification Asymmetric dimethylarginine; alternate. Arg2384 carries the omega-N-methylarginine; alternate modification. Positions 2389–2752 (AYERVSGRTS…PMRHRSSRSP (364 aa)) are disordered. A phosphoserine mark is found at Ser2394, Ser2398, and Ser2407. Thr2409 carries the phosphothreonine modification. 6 positions are modified to phosphoserine: Ser2412, Ser2415, Ser2426, Ser2429, Ser2449, and Ser2453. Positions 2426 to 2439 (SPSSRMGQAPSQSL) are enriched in polar residues. A compositionally biased stretch (polar residues) spans 2455-2473 (FSDQSRCLIAQTTPVAGSQ). 3 stretches are compositionally biased toward low complexity: residues 2474-2487 (SLSSGAVATTTSSA), 2515-2526 (AQQPSALAALQP), and 2533-2567 (SSSSSSSSSSSSSSSSSSSSSSSSGSSSSDSEGSS). Ser2581 carries the phosphoserine modification. Thr2583 bears the Phosphothreonine mark. A Glycyl lysine isopeptide (Lys-Gly) (interchain with G-Cter in SUMO2) cross-link involves residue Lys2587. Thr2599 is modified (phosphothreonine). Low complexity predominate over residues 2608–2648 (SSSSSSSSSSSSSSSSSSSSSSSSSSSSSSSSSSSSSSSSS). The segment covering 2651–2668 (PAKPGPQALPKPASPKKP) has biased composition (pro residues). Phosphoserine is present on residues Ser2664, Ser2675, Ser2677, Ser2684, Ser2688, Ser2690, Ser2692, Ser2694, Ser2702, and Ser2706. Positions 2669–2689 (PPGERRSRSPRKPIDSLRDSR) are enriched in basic and acidic residues. Positions 2707–2716 (PRDQQSSSSE) are enriched in low complexity. Basic and acidic residues predominate over residues 2717 to 2729 (RGSRRGQRGDSRS). At Thr2738 the chain carries Phosphothreonine. Position 2740 is a phosphoserine (Ser2740). A compositionally biased stretch (basic residues) spans 2743–2752 (PMRHRSSRSP).

It belongs to the CWC21 family. In terms of assembly, component of pre-catalytic, catalytic and post-catalytic spliceosome complexes. Found in a pre-mRNA splicing complex with SFRS4, SFRS5, SNRP70, SNRPA1, SRRM1 and SRRM2. Component of the minor spliceosome, which splices U12-type introns. Interacts with DHX8. Interacts with CACTIN. In terms of tissue distribution, expressed in liver, placenta, and white blood cells.

The protein resides in the nucleus. It localises to the nucleus speckle. Its function is as follows. Required for pre-mRNA splicing as component of the spliceosome. As a component of the minor spliceosome, involved in the splicing of U12-type introns in pre-mRNAs. This is Serine/arginine repetitive matrix protein 2 (SRRM2) from Homo sapiens (Human).